Reading from the N-terminus, the 549-residue chain is MTNVVVSGEQLQEAFREVAAIVDSTVAITAGPRGKTVGINKPYGAPEITKDGYKVMKGIKPEKPLNAAIASIFAQSCSQCNDKVGDGTTTCSILTSNMIMEASKSIAAGNDRVGIKNGIQKAKDVILKEIASMSRTISLEKIDEVAQVAIISANGDKDIGNSIADSVKKVGKEGVITVEESKGSKELEVELTTGMQFDRGYLSPYFITNNEKMIVELDNPYLLITEKKLNIIQPLLPVLEAIVKSGKPLVIIAEDIEGEALSTLVINKLRGGLKVAAVKAPGFGDRRKEMLEDIATLTGAKYVIKDELGIKMEDLTLDDLGTAKNVKITKDNTTVVSENSDSDSVKARIEQIKSQIETSTSDYDKEKLRERLAKLSGGVAVLKVGGATEVEVKERRDRVEDALHATRAAIEEGIVPGGGVALLYASSVLDKLKGASDEEQIGINIIKKVLSAPIRRLVKNAGLESAVIIDYLIKQNDKELIYNVEAMNYANAFTAGVIDPAKVVRIAFETAVSVASVLITTESMIVDVPSKENASSPMGAGEMSGMGGF.

ATP-binding positions include 29 to 32 (TAGP), Lys-50, 86 to 90 (DGTTT), Gly-418, and Asp-499.

This sequence belongs to the chaperonin (HSP60) family. In terms of assembly, forms a cylinder of 14 subunits composed of two heptameric rings stacked back-to-back. Interacts with the co-chaperonin GroES.

It is found in the cytoplasm. It catalyses the reaction ATP + H2O + a folded polypeptide = ADP + phosphate + an unfolded polypeptide.. Together with its co-chaperonin GroES, plays an essential role in assisting protein folding. The GroEL-GroES system forms a nano-cage that allows encapsulation of the non-native substrate proteins and provides a physical environment optimized to promote and accelerate protein folding. The protein is Chaperonin GroEL of Wolbachia sp. subsp. Drosophila simulans (strain wRi).